The following is a 278-amino-acid chain: Orotidine 5'-phosphate decarboxylase (278 aa).

Substrate contacts are provided by residues Asp-40, 62–64 (KTH), 93–102 (DRKFADIGNT), Tyr-223, and Arg-242. Lys-95 functions as the Proton donor in the catalytic mechanism.

Belongs to the OMP decarboxylase family.

The enzyme catalyses orotidine 5'-phosphate + H(+) = UMP + CO2. Its pathway is pyrimidine metabolism; UMP biosynthesis via de novo pathway; UMP from orotate: step 2/2. The protein is Orotidine 5'-phosphate decarboxylase (URA1) of Schizophyllum commune (Split gill fungus).